A 164-amino-acid chain; its full sequence is Proline-rich protein 2 (164 aa).

The first 21 residues, 1 to 21 (MNLKVGIAVLIIALIVPSAQP), serve as a signal peptide directing secretion.

Component of the acid-soluble organic matrix of calcified layers of the shell (at protein level).

The protein localises to the secreted. The protein is Proline-rich protein 2 of Lottia gigantea (Giant owl limpet).